The sequence spans 131 residues: MRHYEIVFMVHPDQSEQVPGMIERYTGAITAAEGTIHRLEDWGRRQLAYPINKLHKAHYVLLNVEAPQEAIDELETNFRFNDAVIRSMVMRTKNAVTEASPMVKAKDERRERRDDFANETADDSDAGDSEE.

Positions 98–131 are disordered; the sequence is EASPMVKAKDERRERRDDFANETADDSDAGDSEE. Residues 104–116 are compositionally biased toward basic and acidic residues; it reads KAKDERRERRDDF. The segment covering 120-131 has biased composition (acidic residues); the sequence is TADDSDAGDSEE.

It belongs to the bacterial ribosomal protein bS6 family.

Its function is as follows. Binds together with bS18 to 16S ribosomal RNA. This Enterobacter sp. (strain 638) protein is Small ribosomal subunit protein bS6.